A 1194-amino-acid chain; its full sequence is Protein argonaute 3 (1194 aa).

The segment covering 1–98 (MDRGGYRGGR…GRGGGGDRGR (98 aa)) has biased composition (basic and acidic residues). 2 disordered regions span residues 1-277 (MDRG…VSQS) and 299-341 (TVLP…DKGG). Residues 142–158 (PPSSSQAQVSQGVAPGD) show a composition bias toward low complexity. Positions 167–180 (VGRDGVGDVGRDGV) are enriched in basic and acidic residues. Residues 181 to 214 (GDVGQGGVGDVGQVGVGDVGQGGVGDVGQGGVGD) show a composition bias toward gly residues. The span at 215 to 228 (VGRDGVGDVGRDGV) shows a compositional bias: basic and acidic residues. Over residues 229–238 (GDVGRGGVGD) the composition is skewed to gly residues. 2 stretches are compositionally biased toward low complexity: residues 256-277 (QLQQ…VSQS) and 299-316 (TVLP…HTAS). The segment covering 317–326 (GSQVMTPKPS) has biased composition (polar residues). Positions 327–341 (SSDKKEPVKRPDKGG) are enriched in basic and acidic residues. Residues 540-656 (SVIEYLKLYF…VPMEFCNLVE (117 aa)) form the PAZ domain. Residues 841-1145 (LVLCAMTGKH…AASRGRVYYE (305 aa)) enclose the Piwi domain.

This sequence belongs to the argonaute family. Ago subfamily.

Functionally, involved in RNA-mediated post-transcriptional gene silencing (PTGS). Main component of the RNA-induced silencing complex (RISC) that binds to a short guide RNA such as a microRNA (miRNA) or small interfering RNA (siRNA). RISC uses the mature miRNA or siRNA as a guide for slicer-directed cleavage of homologous mRNAs to repress gene expression. The chain is Protein argonaute 3 (AGO3) from Arabidopsis thaliana (Mouse-ear cress).